A 671-amino-acid polypeptide reads, in one-letter code: cGMP-dependent protein kinase 1 (671 aa).

An N-acetylserine modification is found at Ser2. Residues 2–59 (SELEEDFAKILMLKEERIKELEKRLSEKEEEIQELKRKLHKCQSVLPVPSTHIGPRTT) adopt a coiled-coil conformation. A required for dimerization region spans residues 2–102 (SELEEDFAKI…LIKEAILDND (101 aa)). Residues 9–44 (AKILMLKEERIKELEKRLSEKEEEIQELKRKLHKCQ) are leucine-zipper. Residues 50–75 (PSTHIGPRTTRAQGISAEPQTYRSFH) form an autoinhibitory domain region. Thr59 bears the Phosphothreonine; by autocatalysis mark. Residues 103–220 (FMKNLELSQI…EYMEFLKSVP (118 aa)) form a cGMP-binding, high affinity region. 3',5'-cyclic AMP contacts are provided by residues 167–170 (GELA) and 177–178 (RT). 3',5'-cyclic GMP contacts are provided by residues 167–170 (GELA), 177–178 (RT), Arg282, 291–294 (GEKA), 301–302 (RT), and Tyr336. The cGMP-binding, low affinity stretch occupies residues 221 to 341 (TFQSLPEEIL…SNKAYEDAEA (121 aa)). The Protein kinase domain maps to 360–619 (FNIIDTLGVG…VKDIQKHKWF (260 aa)). ATP-binding positions include 366–374 (LGVGGFGRV) and Lys390. Catalysis depends on Asp484, which acts as the Proton acceptor. Position 515 is a phosphothreonine (Thr515). Residues 620-671 (EGFNWEGLRKGTLTPPIIPSVASPTDTSNFDSFPEDNDEPPPDDNSGWDIDF) form the AGC-kinase C-terminal domain. The tract at residues 635-671 (PIIPSVASPTDTSNFDSFPEDNDEPPPDDNSGWDIDF) is disordered. The span at 652-661 (FPEDNDEPPP) shows a compositional bias: acidic residues.

Belongs to the protein kinase superfamily. AGC Ser/Thr protein kinase family. cGMP subfamily. Isoform alpha: parallel homodimer or heterodimer and also heterotetramer. Interacts directly with PPP1R12A. Non-covalent dimer of dimer of PRKG1-PRKG1 and PPP1R12A-PPP1R12A. This interaction targets PRKG1 to stress fibers to mediate smooth muscle cell relaxation and vasodilation in responses to rises in cGMP. Isoform beta: antiparallel homodimer. Part of cGMP kinase signaling complex at least composed of ACTA2/alpha-actin, CNN1/calponin H1, PLN/phospholamban, PRKG1 and ITPR1. Interacts with IRAG1. Forms a stable complex with ITPR1, IRAG1, and isoform beta of PRKG1. Interacts with TRPC7 (via ankyrin repeat domain). Isoform alpha interacts with RGS2. Interacts with GTF2I. Autophosphorylation increases kinase activity. In terms of processing, 65 kDa monomer is produced by proteolytic cleavage. High concentrations are detected in various smooth muscle: lung, rumen, trachea, aorta, uterus and stomach. Isoform alpha is expressed predominantly in heart, cerebellum and lung, whereas the beta isoform is expressed in high concentrations in trachea, aorta, stomach and uterus.

The protein resides in the cytoplasm. It catalyses the reaction L-seryl-[protein] + ATP = O-phospho-L-seryl-[protein] + ADP + H(+). The enzyme catalyses L-threonyl-[protein] + ATP = O-phospho-L-threonyl-[protein] + ADP + H(+). In the absence of cGMP, PRKG1 activity is suppressed by autoinhibitory contacts. Serine/threonine protein kinase that acts as a key mediator of the nitric oxide (NO)/cGMP signaling pathway. GMP binding activates PRKG1, which phosphorylates serines and threonines on many cellular proteins. Numerous protein targets for PRKG1 phosphorylation are implicated in modulating cellular calcium, but the contribution of each of these targets may vary substantially among cell types. Proteins that are phosphorylated by PRKG1 regulate platelet activation and adhesion, smooth muscle contraction, cardiac function, gene expression, feedback of the NO-signaling pathway, and other processes involved in several aspects of the CNS like axon guidance, hippocampal and cerebellar learning, circadian rhythm and nociception. Smooth muscle relaxation is mediated through lowering of intracellular free calcium, by desensitization of contractile proteins to calcium, and by decrease in the contractile state of smooth muscle or in platelet activation. Regulates intracellular calcium levels via several pathways: phosphorylates IRAG1 and inhibits IP3-induced Ca(2+) release from intracellular stores, phosphorylation of KCNMA1 (BKCa) channels decreases intracellular Ca(2+) levels, which leads to increased opening of this channel. PRKG1 phosphorylates the canonical transient receptor potential channel (TRPC) family which inactivates the associated inward calcium current. Another mode of action of NO/cGMP/PKGI signaling involves PKGI-mediated inactivation of the Ras homolog gene family member A (RhoA). Phosphorylation of RHOA by PRKG1 blocks the action of this protein in myriad processes: regulation of RHOA translocation; decreasing contraction; controlling vesicle trafficking, reduction of myosin light chain phosphorylation resulting in vasorelaxation. Activation of PRKG1 by NO signaling also alters gene expression in a number of tissues. In smooth muscle cells, increased cGMP and PRKG1 activity influence expression of smooth muscle-specific contractile proteins, levels of proteins in the NO/cGMP signaling pathway, down-regulation of the matrix proteins osteopontin and thrombospondin-1 to limit smooth muscle cell migration and phenotype. Regulates vasodilator-stimulated phosphoprotein (VASP) functions in platelets and smooth muscle. The polypeptide is cGMP-dependent protein kinase 1 (PRKG1) (Bos taurus (Bovine)).